Consider the following 412-residue polypeptide: Histone-lysine N-methyltransferase SUV39H1 (412 aa).

Residues 1-89 (MAENLKGCSV…LKCVRILKQF (89 aa)) are interaction with SIRT1. A Chromo domain is found at 43 to 101 (FEVEYLCDYKKIREQEYYLVKWRGYPDSESTWEPRQNLKCVRILKQFHKDLERELLRRH). Positions 179 to 240 (VGCECQDCLW…DCPNRVVQKG (62 aa)) constitute a Pre-SET domain. The Zn(2+) site is built by C181, C183, C186, C194, C195, C222, C226, C228, and C232. Positions 243–366 (YDLCIFRTDD…AGEELTFDYN (124 aa)) constitute an SET domain. 254-256 (RGW) is an S-adenosyl-L-methionine binding site. The mediates interaction with MECOM stretch occupies residues 255–377 (GWGVRTLEKI…QVDPVDMEST (123 aa)). At K266 the chain carries N6-acetyllysine. S-adenosyl-L-methionine contacts are provided by residues Y297 and 323-324 (NH). Position 326 (C326) interacts with Zn(2+). The residue at position 391 (S391) is a Phosphoserine. Residues 396 to 412 (VRIECKCGTESCRKYLF) form the Post-SET domain. Zn(2+) contacts are provided by C400, C402, and C407.

It belongs to the class V-like SAM-binding methyltransferase superfamily. Histone-lysine methyltransferase family. Suvar3-9 subfamily. In terms of assembly, interacts with H3 and H4 histones. Interacts with GFI1B, DNMT3B, CBX1, CBX4, CCAR2, MBD1, RUNX1, RUNX3, MYOD1, SMAD5 and RB1. Interacts with SBF1 through the SET domain. Interacts with HDAC1 and HDAC2 through the N-terminus and associates with the core histone deacetylase complex composed of HDAC1, HDAC2, RBBP4 and RBBP7. Component of the eNoSC complex, composed of SIRT1, SUV39H1 and RRP8. Interacts (via SET domain) with MECOM; enhances MECOM transcriptional repression activity. Interacts with LMNA; the interaction increases stability of SUV39H1. The large PER complex involved in the histone methylation is composed of at least PER2, CBX3, TRIM28, SUV39H1 and/or SUV39H2; CBX3 mediates the formation of the complex. As to quaternary structure, (Microbial infection) Interacts with HTLV-1 Tax protein, leading to abrogate Tax transactivation of HTLV-1 LTR. In terms of processing, phosphorylated on serine residues, and to a lesser degree, on threonine residues. The phosphorylated form is stabilized by SBF1 and is less active in its transcriptional repressor function. Ubiquitinated by the DCX(DCAF13) E3 ubiquitin ligase complex, leading to its degradation. Post-translationally, acetylated at Lys-266, leading to inhibition of enzyme activity. SIRT1-mediated deacetylation relieves this inhibition. In terms of processing, (Microbial infection) A higher molecular weight form is also seen in M.bovis infected cells.

It localises to the nucleus. The protein resides in the nucleus lamina. Its subcellular location is the nucleoplasm. The protein localises to the chromosome. It is found in the centromere. It localises to the cytoplasmic vesicle. The protein resides in the phagosome lumen. Its subcellular location is the cell membrane. It catalyses the reaction L-lysyl(9)-[histone H3] + 3 S-adenosyl-L-methionine = N(6),N(6),N(6)-trimethyl-L-lysyl(9)-[histone H3] + 3 S-adenosyl-L-homocysteine + 3 H(+). With respect to regulation, inhibited by S-adenosyl-L-homocysteine. Negatively regulated by CCAR2. Functionally, histone methyltransferase that specifically trimethylates 'Lys-9' of histone H3 using monomethylated H3 'Lys-9' as substrate. Also weakly methylates histone H1 (in vitro). H3 'Lys-9' trimethylation represents a specific tag for epigenetic transcriptional repression by recruiting HP1 (CBX1, CBX3 and/or CBX5) proteins to methylated histones. Mainly functions in heterochromatin regions, thereby playing a central role in the establishment of constitutive heterochromatin at pericentric and telomere regions. H3 'Lys-9' trimethylation is also required to direct DNA methylation at pericentric repeats. SUV39H1 is targeted to histone H3 via its interaction with RB1 and is involved in many processes, such as repression of MYOD1-stimulated differentiation, regulation of the control switch for exiting the cell cycle and entering differentiation, repression by the PML-RARA fusion protein, BMP-induced repression, repression of switch recombination to IgA and regulation of telomere length. Component of the eNoSC (energy-dependent nucleolar silencing) complex, a complex that mediates silencing of rDNA in response to intracellular energy status and acts by recruiting histone-modifying enzymes. The eNoSC complex is able to sense the energy status of cell: upon glucose starvation, elevation of NAD(+)/NADP(+) ratio activates SIRT1, leading to histone H3 deacetylation followed by dimethylation of H3 at 'Lys-9' (H3K9me2) by SUV39H1 and the formation of silent chromatin in the rDNA locus. Recruited by the large PER complex to the E-box elements of the circadian target genes such as PER2 itself or PER1, contributes to the conversion of local chromatin to a heterochromatin-like repressive state through H3 'Lys-9' trimethylation. In terms of biological role, (Microbial infection) Plays a role in defense against mycobacterial infections. Methylates M.tuberculosis HupB on 'Lys-140', probably methylates HupB of M.bovis also. Methylation has an inhibitory effect on mycobacterial growth in the host. Macrophages expressing about 60% SUV39H1 are slightly more susceptible to M.bovis or M.tuberculosis infection. Chaetocin (an inhibitor of this enzyme) increases macrophage survival of M.tuberculosis. This protein inhibits biofilm formation by M.tuberculosis via 'Lys-140' trimethylation. This is Histone-lysine N-methyltransferase SUV39H1 (SUV39H1) from Homo sapiens (Human).